The chain runs to 245 residues: Small ribosomal subunit protein uS2 (245 aa).

This sequence belongs to the universal ribosomal protein uS2 family.

The polypeptide is Small ribosomal subunit protein uS2 (Pseudomonas fluorescens (strain SBW25)).